A 73-amino-acid polypeptide reads, in one-letter code: uncharacterized protein (73 aa).

Residues 48–73 form a disordered region; the sequence is AKEPEKKTPSMEAKATSLSPNKASAS. Residues 63–73 show a composition bias toward polar residues; sequence TSLSPNKASAS.

This is an uncharacterized protein from Saccharomyces cerevisiae (strain ATCC 204508 / S288c) (Baker's yeast).